The primary structure comprises 310 residues: tRNA dimethylallyltransferase (310 aa).

24–31 (GPTASGKT) contacts ATP. Residue 26-31 (TASGKT) participates in substrate binding. Positions 49-52 (DSRQ) are interaction with substrate tRNA.

This sequence belongs to the IPP transferase family. As to quaternary structure, monomer. Requires Mg(2+) as cofactor.

It catalyses the reaction adenosine(37) in tRNA + dimethylallyl diphosphate = N(6)-dimethylallyladenosine(37) in tRNA + diphosphate. Its function is as follows. Catalyzes the transfer of a dimethylallyl group onto the adenine at position 37 in tRNAs that read codons beginning with uridine, leading to the formation of N6-(dimethylallyl)adenosine (i(6)A). This Synechococcus sp. (strain WH7803) protein is tRNA dimethylallyltransferase.